The sequence spans 409 residues: uncharacterized protein (409 aa).

12 helical membrane passes run 3 to 23, 43 to 63, 73 to 93, 95 to 115, 135 to 155, 162 to 182, 209 to 229, 248 to 268, 283 to 303, 309 to 329, 346 to 366, and 379 to 399; these read IIVK…PTTE, ITQI…LSLG, PIVL…IFSV, IEML…GSVI, ILSP…GYII, YVFV…YKIL, ILWL…GFFI, KLAF…GYLI, FIFS…LEFI, LAIS…SLLI, TAGS…TYCV, and LLCL…CILY.

Belongs to the major facilitator superfamily. Bcr/CmlA family.

Its subcellular location is the cell inner membrane. This is an uncharacterized protein from Rickettsia typhi (strain ATCC VR-144 / Wilmington).